The primary structure comprises 114 residues: Phosphoribosyl-AMP cyclohydrolase (114 aa).

Asp-80 contacts Mg(2+). Residue Cys-81 participates in Zn(2+) binding. Mg(2+)-binding residues include Asp-82 and Asp-84. Positions 97 and 104 each coordinate Zn(2+).

Belongs to the PRA-CH family. Homodimer. Mg(2+) serves as cofactor. It depends on Zn(2+) as a cofactor.

The protein resides in the cytoplasm. It catalyses the reaction 1-(5-phospho-beta-D-ribosyl)-5'-AMP + H2O = 1-(5-phospho-beta-D-ribosyl)-5-[(5-phospho-beta-D-ribosylamino)methylideneamino]imidazole-4-carboxamide. Its pathway is amino-acid biosynthesis; L-histidine biosynthesis; L-histidine from 5-phospho-alpha-D-ribose 1-diphosphate: step 3/9. Functionally, catalyzes the hydrolysis of the adenine ring of phosphoribosyl-AMP. The polypeptide is Phosphoribosyl-AMP cyclohydrolase (Rhodococcus jostii (strain RHA1)).